The primary structure comprises 600 residues: MKKQLRSSFSTQGRRMAGARALWAANGMKKNQMGKPIIAIVNSFTQFVPGHVHLHEIGQLVKAEIEKLGCFAAEFNTIAIDDGIAMGHDGMLYSLPSRDIIADSVEYMVNAHKADAMVCISNCDKITPGMLMAAMRLNIPTVFVSGGPMEAGEWNGQHLDLIDAMIKSADDSVSDQEVANIEQNACPTCGCCSGMFTANSMNCLNEAIGLALPGNGTIVATHENRTKLFEDAAKLIVENAMKYYEEGDESVLPRSIATRQAFLNAMTLDIAMGGSTNTVLHLLAVAHEAGVDFKMDDIDMLSRKTPCLCKVAPNTQKYHIQDVNRAGGIIAILAELAKGGLIDTSVLRVDGMSLAEAIDQYSITSPNVTEKAMSKYSSAAGNRFNLVLGSQGAYYQELDKDRANGCIRDLEHAYSKDGGLAVLKGNIAQDGCVVKTAGVDESIWKFTGPAKVFDSQEAACEGILGGRVVSGDVVVITHEGPKGGPGMQEMLYPTSYIKSRHLGKECALITDGRFSGGTSGLSIGHVSPEAAAGGNIGKIVDGDIIEIDIPARTINVRLTDEELAARPMTPVTRDRYVPKSLKAYASMVSSADKGAVRLID.

Asp-82 provides a ligand contact to Mg(2+). Cys-123 serves as a coordination point for [2Fe-2S] cluster. Mg(2+)-binding residues include Asp-124 and Lys-125. The residue at position 125 (Lys-125) is an N6-carboxylysine. Cys-192 is a [2Fe-2S] cluster binding site. Glu-489 lines the Mg(2+) pocket. The active-site Proton acceptor is the Ser-515.

It belongs to the IlvD/Edd family. Homodimer. Requires [2Fe-2S] cluster as cofactor. Mg(2+) is required as a cofactor.

It carries out the reaction (2R)-2,3-dihydroxy-3-methylbutanoate = 3-methyl-2-oxobutanoate + H2O. The catalysed reaction is (2R,3R)-2,3-dihydroxy-3-methylpentanoate = (S)-3-methyl-2-oxopentanoate + H2O. Its pathway is amino-acid biosynthesis; L-isoleucine biosynthesis; L-isoleucine from 2-oxobutanoate: step 3/4. The protein operates within amino-acid biosynthesis; L-valine biosynthesis; L-valine from pyruvate: step 3/4. Its function is as follows. Functions in the biosynthesis of branched-chain amino acids. Catalyzes the dehydration of (2R,3R)-2,3-dihydroxy-3-methylpentanoate (2,3-dihydroxy-3-methylvalerate) into 2-oxo-3-methylpentanoate (2-oxo-3-methylvalerate) and of (2R)-2,3-dihydroxy-3-methylbutanoate (2,3-dihydroxyisovalerate) into 2-oxo-3-methylbutanoate (2-oxoisovalerate), the penultimate precursor to L-isoleucine and L-valine, respectively. The protein is Dihydroxy-acid dehydratase of Bacteroides thetaiotaomicron (strain ATCC 29148 / DSM 2079 / JCM 5827 / CCUG 10774 / NCTC 10582 / VPI-5482 / E50).